The primary structure comprises 54 residues: Ovomucoid (54 aa).

Residues 4–54 (VDCSEYPKPVCSLEYMPLCGSDSQTYSNECNFCNAVVDSNGTLTLSHFGKC) form the Kazal-like domain. Intrachain disulfides connect Cys6-Cys36, Cys14-Cys33, and Cys22-Cys54. Residue Asn43 is glycosylated (N-linked (GlcNAc...) asparagine).

The protein resides in the secreted. The chain is Ovomucoid from Caracara plancus (Southern caracara).